The following is a 505-amino-acid chain: Apolipoprotein N-acyltransferase (505 aa).

6 consecutive transmembrane segments (helical) span residues 26 to 46, 66 to 86, 89 to 109, 129 to 149, 161 to 181, and 186 to 206; these read FAPY…LILL, FATG…MPLI, LFLM…FAWL, LWLI…WLWL, FAPI…AGAL, and IHKQ…GFGI. In terms of domain architecture, CN hydrolase spans 225–471; sequence IQGNVDQNLK…TAVLRAELTP (247 aa). Glutamate 264 (proton acceptor) is an active-site residue. The active site involves lysine 330. Catalysis depends on cysteine 382, which acts as the Nucleophile. The chain crosses the membrane as a helical span at residues 481-501; the sequence is FGTWPLYFWVALSLMLAWWLP.

It belongs to the CN hydrolase family. Apolipoprotein N-acyltransferase subfamily.

It localises to the cell inner membrane. The enzyme catalyses N-terminal S-1,2-diacyl-sn-glyceryl-L-cysteinyl-[lipoprotein] + a glycerophospholipid = N-acyl-S-1,2-diacyl-sn-glyceryl-L-cysteinyl-[lipoprotein] + a 2-acyl-sn-glycero-3-phospholipid + H(+). The protein operates within protein modification; lipoprotein biosynthesis (N-acyl transfer). Catalyzes the phospholipid dependent N-acylation of the N-terminal cysteine of apolipoprotein, the last step in lipoprotein maturation. The protein is Apolipoprotein N-acyltransferase of Vibrio parahaemolyticus serotype O3:K6 (strain RIMD 2210633).